The primary structure comprises 151 residues: Small ribosomal subunit protein bS6 (151 aa).

The tract at residues 96–151 is disordered; the sequence is HEEGQSAMLTRRDDRRERDGDDRPRRREGGFDRGDRGDRGDRGPRRPRDNEAGEGA.

This sequence belongs to the bacterial ribosomal protein bS6 family.

Binds together with bS18 to 16S ribosomal RNA. The chain is Small ribosomal subunit protein bS6 from Brucella anthropi (strain ATCC 49188 / DSM 6882 / CCUG 24695 / JCM 21032 / LMG 3331 / NBRC 15819 / NCTC 12168 / Alc 37) (Ochrobactrum anthropi).